Consider the following 147-residue polypeptide: D-aminoacyl-tRNA deacylase (147 aa).

The Gly-cisPro motif, important for rejection of L-amino acids motif lies at 138–139 (GP).

It belongs to the DTD family. As to quaternary structure, homodimer.

It is found in the cytoplasm. The enzyme catalyses glycyl-tRNA(Ala) + H2O = tRNA(Ala) + glycine + H(+). It carries out the reaction a D-aminoacyl-tRNA + H2O = a tRNA + a D-alpha-amino acid + H(+). In terms of biological role, an aminoacyl-tRNA editing enzyme that deacylates mischarged D-aminoacyl-tRNAs. Also deacylates mischarged glycyl-tRNA(Ala), protecting cells against glycine mischarging by AlaRS. Acts via tRNA-based rather than protein-based catalysis; rejects L-amino acids rather than detecting D-amino acids in the active site. By recycling D-aminoacyl-tRNA to D-amino acids and free tRNA molecules, this enzyme counteracts the toxicity associated with the formation of D-aminoacyl-tRNA entities in vivo and helps enforce protein L-homochirality. The protein is D-aminoacyl-tRNA deacylase of Prosthecochloris aestuarii (strain DSM 271 / SK 413).